A 352-amino-acid polypeptide reads, in one-letter code: Rhodopsin, deep-sea form (352 aa).

The Extracellular portion of the chain corresponds to 1–36 (MNGTEGPNFYIPMSNITGVVRSPFEYPQYYLAEPWA). Asparagine 2 and asparagine 15 each carry an N-linked (GlcNAc...) asparagine glycan. The chain crosses the membrane as a helical span at residues 37 to 61 (YTILAAYMFTLILLGFPVNFLTLYV). Over 62 to 73 (TIEHKKLRTPLN) the chain is Cytoplasmic. Residues 74 to 98 (YILLNLAVANLFMVFGGFTTTVYTS) traverse the membrane as a helical segment. The Extracellular portion of the chain corresponds to 99–113 (MHGYFVFGETGCNLE). A disulfide bridge links cysteine 110 with cysteine 187. The chain crosses the membrane as a helical span at residues 114–133 (GYFATLGGEISLWSLVVLAI). The Cytoplasmic segment spans residues 134-152 (ERWVVVCKPMSNFRFGENH). Residues 153 to 176 (AIMGLAFTWIMANSCAMPPLFGWS) form a helical membrane-spanning segment. Residues 177-202 (RYIPEGMQCSCGVDYYTLKPEVNNES) are Extracellular-facing. A glycan (N-linked (GlcNAc...) asparagine) is linked at asparagine 200. Residues 203-230 (FVIYMFIVHFSVPLTIISFCYGRLVCTV) traverse the membrane as a helical segment. The Cytoplasmic segment spans residues 231-252 (KEAAAQQQESETTQRAEREVTR). A helical membrane pass occupies residues 253–276 (MVVIMVIAFLVCWVPYASVAWYIF). Over 277–284 (THQGSTFG) the chain is Extracellular. Residues 285–309 (PVFMTVPSFFAKSSAIYNPLIYICL) form a helical membrane-spanning segment. Lysine 296 bears the N6-(retinylidene)lysine mark. The Cytoplasmic segment spans residues 310–352 (NSQFRNCMITTLFCGKNPFQEEEGASTTASKTEASSVSSVSPA). Cysteine 323 carries the S-palmitoyl cysteine lipid modification. The interval 333–352 (GASTTASKTEASSVSSVSPA) is disordered. The span at 334 to 352 (ASTTASKTEASSVSSVSPA) shows a compositional bias: low complexity.

Belongs to the G-protein coupled receptor 1 family. Opsin subfamily. In terms of processing, phosphorylated on some or all of the serine and threonine residues present in the C-terminal region. Rod shaped photoreceptor cells which mediates vision in dim light.

The protein resides in the membrane. Functionally, visual pigments such as rhodopsin and porphyropsin are light-absorbing molecules that mediate vision. Rhodopsin consists of an apoprotein, opsin, covalently linked to 11-cis-retinal. This receptor is coupled to the activation of phospholipase C. Porphyropsin consists of opsin covalently linked to 11-cis 3,4-didehydroretinal. The protein is Rhodopsin, deep-sea form of Anguilla anguilla (European freshwater eel).